The chain runs to 1203 residues: Nitric oxide synthase 3 (1203 aa).

Residues 1 to 71 (MGNLKSVAQE…PPEGPKFPRV (71 aa)) are disordered. Gly-2 is lipidated: N-myristoyl glycine. S-palmitoyl cysteine attachment occurs at residues Cys-15 and Cys-26. A compositionally biased stretch (gly residues) spans 15–27 (CGLGLGLGLGLCG). At Thr-33 the chain carries Phosphothreonine. Over residues 33 to 66 (TPAPEPSRAPASLLPPAPEHSPPSSPLTQPPEGP) the composition is skewed to pro residues. 2 residues coordinate Zn(2+): Cys-94 and Cys-99. Residues 98–486 (RCLGSLVFPR…PDPWKGSAAK (389 aa)) are interaction with NOSIP. Position 102 (Ser-102) interacts with (6R)-L-erythro-5,6,7,8-tetrahydrobiopterin. At Ser-114 the chain carries Phosphoserine; by CDK5. A heme b-binding site is contributed by Cys-184. L-arginine-binding residues include Gln-247, Trp-356, Tyr-357, and Glu-361. (6R)-L-erythro-5,6,7,8-tetrahydrobiopterin is bound at residue Arg-365. An L-arginine-binding site is contributed by Asn-366. (6R)-L-erythro-5,6,7,8-tetrahydrobiopterin is bound by residues Ala-446, Trp-447, and Phe-460. Tyr-475 lines the heme b pocket. A calmodulin-binding region spans residues 491 to 510 (TRKKTFKEVANAVKISASLM). The residue at position 495 (Thr-495) is a Phosphothreonine; by AMPK. One can recognise a Flavodoxin-like domain in the interval 520-703 (ATILYGSETG…AFRGWAQAAF (184 aa)). The FMN site is built by Ser-526, Glu-527, Thr-528, Arg-530, Ser-572, and Thr-573. A phosphoserine mark is found at Ser-615, Ser-633, and Ser-638. FMN is bound by residues Ser-654, Cys-661, Glu-687, and Gln-691. Positions 756 to 1002 (RKMFQATIRS…IRGAPSFRLP (247 aa)) constitute an FAD-binding FR-type domain. Arg-776 is a binding site for NADP(+). His-798 provides a ligand contact to FAD. Position 836 is a phosphoserine (Ser-836). FAD-binding residues include Arg-938, Tyr-940, Ser-941, Thr-956, Ala-958, Tyr-962, Val-975, Cys-976, and Ser-977. The NADP(+) site is built by Thr-1016, Arg-1049, Ser-1078, Arg-1079, Lys-1085, Tyr-1087, and Gln-1089. Thr-1175 bears the Phosphothreonine mark. Position 1177 is a phosphoserine; by AMPK (Ser-1177). Phosphoserine is present on Ser-1179.

The protein belongs to the NOS family. In terms of assembly, homodimer. Interacts with NOSIP and NOSTRIN. Interacts with HSP90AB1. Forms a complex with ASL, ASS1 and SLC7A1; the complex regulates cell-autonomous L-arginine synthesis and citrulline recycling while channeling extracellular L-arginine to nitric oxide synthesis pathway. The cofactor is heme b. FAD is required as a cofactor. FMN serves as cofactor. Requires (6R)-L-erythro-5,6,7,8-tetrahydrobiopterin as cofactor. In terms of processing, phosphorylation by AMPK at Ser-1177 in the presence of Ca(2+)-calmodulin (CaM) activates activity. In absence of Ca(2+)-calmodulin, AMPK also phosphorylates Thr-495, resulting in inhibition of activity. Phosphorylation of Ser-114 by CDK5 reduces activity. Platelets, placenta, liver and kidney.

The protein resides in the cell membrane. It localises to the membrane. The protein localises to the caveola. Its subcellular location is the cytoplasm. It is found in the cytoskeleton. The protein resides in the golgi apparatus. The enzyme catalyses 2 L-arginine + 3 NADPH + 4 O2 + H(+) = 2 L-citrulline + 2 nitric oxide + 3 NADP(+) + 4 H2O. Stimulated by calcium/calmodulin. Inhibited by NOSIP and NOSTRIN. Produces nitric oxide (NO) which is implicated in vascular smooth muscle relaxation through a cGMP-mediated signal transduction pathway. NO mediates vascular endothelial growth factor (VEGF)-induced angiogenesis in coronary vessels and promotes blood clotting through the activation of platelets. Its function is as follows. Lacks eNOS activity, dominant-negative form that may down-regulate eNOS activity by forming heterodimers with isoform 1. This Homo sapiens (Human) protein is Nitric oxide synthase 3.